The sequence spans 512 residues: Maturase K (512 aa).

Belongs to the intron maturase 2 family. MatK subfamily.

It is found in the plastid. Its subcellular location is the chloroplast. Its function is as follows. Usually encoded in the trnK tRNA gene intron. Probably assists in splicing its own and other chloroplast group II introns. The polypeptide is Maturase K (Amorphophallus titanum (Titan arum)).